Consider the following 577-residue polypeptide: Arginine--tRNA ligase (577 aa).

The short motif at 122-132 (PNVAKEMHVGH) is the 'HIGH' region element.

Belongs to the class-I aminoacyl-tRNA synthetase family. In terms of assembly, monomer.

It localises to the cytoplasm. The enzyme catalyses tRNA(Arg) + L-arginine + ATP = L-arginyl-tRNA(Arg) + AMP + diphosphate. This chain is Arginine--tRNA ligase, found in Salmonella enteritidis PT4 (strain P125109).